The sequence spans 140 residues: Small ribosomal subunit protein uS19 (140 aa).

The protein belongs to the universal ribosomal protein uS19 family.

In terms of biological role, protein S19 forms a complex with S13 that binds strongly to the 16S ribosomal RNA. The polypeptide is Small ribosomal subunit protein uS19 (Metallosphaera sedula (strain ATCC 51363 / DSM 5348 / JCM 9185 / NBRC 15509 / TH2)).